Here is a 245-residue protein sequence, read N- to C-terminus: 1-(5-phosphoribosyl)-5-[(5-phosphoribosylamino)methylideneamino] imidazole-4-carboxamide isomerase (245 aa).

Asp7 functions as the Proton acceptor in the catalytic mechanism. Asp129 acts as the Proton donor in catalysis.

This sequence belongs to the HisA/HisF family.

It is found in the cytoplasm. It catalyses the reaction 1-(5-phospho-beta-D-ribosyl)-5-[(5-phospho-beta-D-ribosylamino)methylideneamino]imidazole-4-carboxamide = 5-[(5-phospho-1-deoxy-D-ribulos-1-ylimino)methylamino]-1-(5-phospho-beta-D-ribosyl)imidazole-4-carboxamide. Its pathway is amino-acid biosynthesis; L-histidine biosynthesis; L-histidine from 5-phospho-alpha-D-ribose 1-diphosphate: step 4/9. This is 1-(5-phosphoribosyl)-5-[(5-phosphoribosylamino)methylideneamino] imidazole-4-carboxamide isomerase from Escherichia coli O6:K15:H31 (strain 536 / UPEC).